The primary structure comprises 50 residues: Protease inhibitor 2 (50 aa).

The region spanning 2–50 is the Kazal-like domain; sequence EDCVGRKACTREWYPVCGSDGVTYSNPCNFSAQQEQCDPNITIAHMGEC. 2 disulfide bridges follow: C10–C29 and C18–C50. Residues N30 and N41 are each glycosylated (N-linked (GlcNAc...) asparagine).

In terms of biological role, serine protease inhibitor. Strongly inhibits human neutrophil elastase and trypsin, also inhibits porcine pancreatic elastase and subtilisin A. Does not inhibit chymotrypsin, plasma kallikrein, pancreatic kallikrein, thrombin or papain. The polypeptide is Protease inhibitor 2 (Cenchritis muricatus (Beaded periwinkle)).